Reading from the N-terminus, the 447-residue chain is Glutamyl-tRNA(Gln) amidotransferase subunit A (447 aa).

Residues Lys50 and Ser125 each act as charge relay system in the active site. The active-site Acyl-ester intermediate is Ser149.

Belongs to the amidase family. GatA subfamily. In terms of assembly, heterotrimer of A, B and C subunits.

The enzyme catalyses L-glutamyl-tRNA(Gln) + L-glutamine + ATP + H2O = L-glutaminyl-tRNA(Gln) + L-glutamate + ADP + phosphate + H(+). Its function is as follows. Allows the formation of correctly charged Gln-tRNA(Gln) through the transamidation of misacylated Glu-tRNA(Gln) in organisms which lack glutaminyl-tRNA synthetase. The reaction takes place in the presence of glutamine and ATP through an activated gamma-phospho-Glu-tRNA(Gln). The sequence is that of Glutamyl-tRNA(Gln) amidotransferase subunit A from Sulfurimonas denitrificans (strain ATCC 33889 / DSM 1251) (Thiomicrospira denitrificans (strain ATCC 33889 / DSM 1251)).